We begin with the raw amino-acid sequence, 187 residues long: Keratin-associated protein 5-8 (187 aa).

9 tandem repeats follow at residues 28–31 (CCVP), 34–37 (CCKP), 40–43 (CCVP), 109–112 (CCKP), 119–122 (CCKP), 138–141 (CCKP), 148–151 (CCKP), 167–170 (CCKP), and 177–180 (CCVP). The tract at residues 28–180 (CCVPICCCKP…CCSQSSCCVP (153 aa)) is 9 X 4 AA repeats of C-C-X-P.

It belongs to the KRTAP type 5 family. Restricted to hair root, not detected in any other tissues. Expressed in cuticle layers of differentiating hair follicles.

In the hair cortex, hair keratin intermediate filaments are embedded in an interfilamentous matrix, consisting of hair keratin-associated protein (KRTAP), which are essential for the formation of a rigid and resistant hair shaft through their extensive disulfide bond cross-linking with abundant cysteine residues of hair keratins. The matrix proteins include the high-sulfur and high-glycine-tyrosine keratins. The sequence is that of Keratin-associated protein 5-8 (KRTAP5-8) from Homo sapiens (Human).